A 432-amino-acid polypeptide reads, in one-letter code: Glutamyl-tRNA reductase (432 aa).

Substrate-binding positions include Thr49–Arg52, Ser109, Glu114–Gln116, and Gln120. Cys50 acts as the Nucleophile in catalysis. Gly198 to Ser203 contributes to the NADP(+) binding site.

It belongs to the glutamyl-tRNA reductase family. As to quaternary structure, homodimer.

It catalyses the reaction (S)-4-amino-5-oxopentanoate + tRNA(Glu) + NADP(+) = L-glutamyl-tRNA(Glu) + NADPH + H(+). It participates in porphyrin-containing compound metabolism; protoporphyrin-IX biosynthesis; 5-aminolevulinate from L-glutamyl-tRNA(Glu): step 1/2. Its pathway is porphyrin-containing compound metabolism; chlorophyll biosynthesis. Its function is as follows. Catalyzes the NADPH-dependent reduction of glutamyl-tRNA(Glu) to glutamate 1-semialdehyde (GSA). The chain is Glutamyl-tRNA reductase from Parasynechococcus marenigrum (strain WH8102).